Here is a 178-residue protein sequence, read N- to C-terminus: MSRVGKKPVIIPDGVTVTFDGNLCTVKGPKGELSRELHPDIKITVEGNEITFERPSDHKEHRALHGTMRALVNNMVEGVTKGFERALELNGVGYRASKSGNKLVLNVGYSHPVEITPEEGLEIEVPSNTKVVVKGINKERVGALASNIRAVRLPEPYKGKGIRYEGEYVRRKEGKTGK.

This sequence belongs to the universal ribosomal protein uL6 family. In terms of assembly, part of the 50S ribosomal subunit.

Functionally, this protein binds to the 23S rRNA, and is important in its secondary structure. It is located near the subunit interface in the base of the L7/L12 stalk, and near the tRNA binding site of the peptidyltransferase center. This chain is Large ribosomal subunit protein uL6, found in Shouchella clausii (strain KSM-K16) (Alkalihalobacillus clausii).